A 1132-amino-acid polypeptide reads, in one-letter code: Tyrosine-protein kinase JAK2 (1132 aa).

The segment at 1-239 (MGMACLTMTE…RYRFRRFIQQ (239 aa)) is interaction with cytokine/interferon/growth hormone receptors. One can recognise an FERM domain in the interval 37–380 (PVLQVYLYHS…GYYRLTADAH (344 aa)). Tyrosine 119 is subject to Phosphotyrosine; by autocatalysis. Phosphotyrosine occurs at positions 372 and 373. The SH2; atypical domain maps to 401–482 (HGPISMDFAI…NLKDLLNCYQ (82 aa)). Serine 523 carries the phosphoserine modification. In terms of domain architecture, Protein kinase 1 spans 545 to 809 (LIFNESLGQG…AVIRDLNSLF (265 aa)). Residues tyrosine 570 and tyrosine 813 each carry the phosphotyrosine modification. The region spanning 849–1124 (LKFLQQLGKG…SFRDLSLRVD (276 aa)) is the Protein kinase 2 domain. 855 to 863 (LGKGNFGSV) lines the ATP pocket. Tyrosine 868 bears the Phosphotyrosine; by autocatalysis mark. Lysine 882 lines the ATP pocket. Phosphotyrosine; by autocatalysis is present on residues tyrosine 966 and tyrosine 972. The active-site Proton acceptor is aspartate 976. Tyrosine 1007 and tyrosine 1008 each carry phosphotyrosine; by autocatalysis.

The protein belongs to the protein kinase superfamily. Tyr protein kinase family. JAK subfamily. Interacts with IL23R, SKB1 and STAM2. Interacts with EPOR. Interacts with LYN. Interacts with SIRPA. Interacts with SH2B1. Interacts with TEC. Interacts with IFNGR2 (via intracellular domain). Interacts with LEPR (Isoform B). Interacts with HSP90AB1; promotes functional activation in a heat shock-dependent manner. Interacts with STRA6. Interacts with ASB2; the interaction targets JAK2 for Notch-induced proteasomal degradation. Interacts with MPL/TPOR. It depends on Mg(2+) as a cofactor. In terms of processing, autophosphorylated, leading to regulate its activity. Leptin promotes phosphorylation on tyrosine residues, including phosphorylation on Tyr-813. Autophosphorylation on Tyr-119 in response to EPO down-regulates its kinase activity. Autophosphorylation on Tyr-868, Tyr-966 and Tyr-972 in response to growth hormone (GH) are required for maximal kinase activity. Also phosphorylated by TEC. Phosphorylated on tyrosine residues in response to interferon gamma signaling. Phosphorylated on tyrosine residues in response to a signaling cascade that is activated by increased cellular retinol. Undergoes Notch-induced ubiquitination and subsequent proteasomal degradation which is mediated by ASB1 or ASB2, the substrate-recognition components of probable ECS E3 ubiquitin-protein ligase complexes. Ubiquitously expressed throughout most tissues.

The protein resides in the endomembrane system. Its subcellular location is the cytoplasm. It is found in the nucleus. The enzyme catalyses L-tyrosyl-[protein] + ATP = O-phospho-L-tyrosyl-[protein] + ADP + H(+). Its activity is regulated as follows. Regulated by autophosphorylation, can both activate or decrease activity. Heme regulates its activity by enhancing the phosphorylation on Tyr-1007 and Tyr-1008. In terms of biological role, non-receptor tyrosine kinase involved in various processes such as cell growth, development, differentiation or histone modifications. Mediates essential signaling events in both innate and adaptive immunity. In the cytoplasm, plays a pivotal role in signal transduction via its association with type I receptors such as growth hormone (GHR), prolactin (PRLR), leptin (LEPR), erythropoietin (EPOR), thrombopoietin receptor (MPL/TPOR); or type II receptors including IFN-alpha, IFN-beta, IFN-gamma and multiple interleukins. Following ligand-binding to cell surface receptors, phosphorylates specific tyrosine residues on the cytoplasmic tails of the receptor, creating docking sites for STATs proteins. Subsequently, phosphorylates the STATs proteins once they are recruited to the receptor. Phosphorylated STATs then form homodimer or heterodimers and translocate to the nucleus to activate gene transcription. For example, cell stimulation with erythropoietin (EPO) during erythropoiesis leads to JAK2 autophosphorylation, activation, and its association with erythropoietin receptor (EPOR) that becomes phosphorylated in its cytoplasmic domain. Then, STAT5 (STAT5A or STAT5B) is recruited, phosphorylated and activated by JAK2. Once activated, dimerized STAT5 translocates into the nucleus and promotes the transcription of several essential genes involved in the modulation of erythropoiesis. Part of a signaling cascade that is activated by increased cellular retinol and that leads to the activation of STAT5 (STAT5A or STAT5B). In addition, JAK2 mediates angiotensin-2-induced ARHGEF1 phosphorylation. Plays a role in cell cycle by phosphorylating CDKN1B. Cooperates with TEC through reciprocal phosphorylation to mediate cytokine-driven activation of FOS transcription. In the nucleus, plays a key role in chromatin by specifically mediating phosphorylation of 'Tyr-41' of histone H3 (H3Y41ph), a specific tag that promotes exclusion of CBX5 (HP1 alpha) from chromatin. Up-regulates the potassium voltage-gated channel activity of KCNA3. This chain is Tyrosine-protein kinase JAK2, found in Mus musculus (Mouse).